The primary structure comprises 936 residues: MTMATTDVFIISSSPPRQSVSYNVSSPPLPSLDEMIKQKKAPNLRRGGGAASTPLDPTATFTSASALLRRGSSGSLQEFDTARSLATTTKPDENEQKKTAKPKAPRKPAAKKEDGPIEKVAKVPRKTTRNKGEDRAEGFIEGVVEEGKEGVKTIPEKKPRKSRAKKTDNLGGDGEDGGITGAVVPDVSKVAVETKACKPRAKKGDDITGEGVKERAPRKPRAKKTDVEAGSESVAKEKAVRKPRAKKSDGGTTVQPKMAKGRVTKTTNASNPDKVETPKADKVSKHFASNPVVEDLLAEEGSGLSEAVKRRKNWTPPKSNQVLIDYDDSPEAGSSGCNQGFTELLGSFGFSSSEANSIEKRISSGVSSGAAVTRKRKLIEMVHTNIPTTAGTKATKEKAVKKKARTLTDLATSAYTATEDDDTINDTPAPLLQHFPKAASGELTNDGFKKPPKLRSKSPVKGLPKSKKGSAEEPILLSPESALKQVGNQDFVFGTSSQLAREDSPSLLRDLHDAMQASNELDDYDDPFISPPTKIAERAKAVIAAKRNLWSIAARDDHGDLIDIETVDLAHTPVAKPDRIILSQKPSSLWITPAKDEWYDIDEIEENRPPSTQVPVRQMGPIEMAINLELSNSPLQPKNSSKDVSTSSPRKKHTKASIIETTPKKTTTAKMPDYESFTTPQLSREIQKYKFKQIKSRKKMIDLLVQCFESQNRPALGVLQGNIPITSQGSSEVSKVIAGSSTQLEPTISSSQRGRGRPTKDTAASKSKAKSKIKDSVAILETDSNAPLSEFRTPKKSKKGKQVIEDVPDSDHPMTPSPPRRSASQIRKASKALELSPIKNDHDDEAQQAQLFTHIYTAITSAPPSQDLSNPSWHEKILLYDPVVLEDLASWLNTGALGKVGWDGEVAPKELKKWCESKSICCLWKENQGGGARSRY.

Disordered regions lie at residues 1–182 (MTMA…ITGA), 195–291 (KACK…ASNP), 303–338 (GLSE…SGCN), 437–472 (KAAS…GSAE), 631–671 (SNSP…TAKM), and 734–829 (SKVI…IRKA). Residues 11-26 (ISSSPPRQSVSYNVSS) show a composition bias toward polar residues. A compositionally biased stretch (low complexity) spans 63 to 76 (SASALLRRGSSGSL). Residues 99–109 (TAKPKAPRKPA) show a composition bias toward basic residues. Composition is skewed to basic and acidic residues over residues 110 to 121 (AKKEDGPIEKVA), 145 to 157 (EEGK…IPEK), 202 to 227 (KKGD…KTDV), and 273 to 284 (DKVETPKADKVS). Positions 450–468 (KPPKLRSKSPVKGLPKSKK) are enriched in basic residues. 2 stretches are compositionally biased toward polar residues: residues 631 to 648 (SNSP…STSS) and 734 to 753 (SKVI…SSQR).

It belongs to the SLX4 family. As to quaternary structure, forms a heterodimer with slx1. Phosphorylated in response to DNA damage.

The protein localises to the nucleus. In terms of biological role, regulatory subunit of the slx1-slx4 structure-specific endonuclease that resolves DNA secondary structures generated during DNA repair and recombination. Has endonuclease activity towards branched DNA substrates, introducing single-strand cuts in duplex DNA close to junctions with ss-DNA. The sequence is that of Structure-specific endonuclease subunit slx4 (slx4) from Botryotinia fuckeliana (strain B05.10) (Noble rot fungus).